The chain runs to 486 residues: Betaine aldehyde dehydrogenase (486 aa).

Residues T23 and D90 each coordinate K(+). Position 147–149 (147–149 (GAW)) interacts with NAD(+). K159 (charge relay system) is an active-site residue. NAD(+) contacts are provided by residues 173–176 (KPSE) and 226–229 (ESGT). Position 241 (L241) interacts with K(+). The active-site Proton acceptor is E247. Residues G249, C281, and E382 each contribute to the NAD(+) site. Residue C281 is the Nucleophile of the active site. A Cysteine sulfenic acid (-SOH) modification is found at C281. K(+) is bound by residues K452 and G455. E459 serves as the catalytic Charge relay system.

Belongs to the aldehyde dehydrogenase family. Dimer of dimers. K(+) is required as a cofactor.

The catalysed reaction is betaine aldehyde + NAD(+) + H2O = glycine betaine + NADH + 2 H(+). The protein operates within amine and polyamine biosynthesis; betaine biosynthesis via choline pathway; betaine from betaine aldehyde: step 1/1. Its function is as follows. Involved in the biosynthesis of the osmoprotectant glycine betaine. Catalyzes the irreversible oxidation of betaine aldehyde to the corresponding acid. The sequence is that of Betaine aldehyde dehydrogenase from Vibrio vulnificus (strain YJ016).